A 691-amino-acid chain; its full sequence is MVRTMPIERVRNIGIAAHIDAGKTTTTERILFYSGIVHKMGEVHYGTAVTDWMAQERERGITITAAAISTKWLDHQINIIDTPGHVDFTIEVERSMRVLDGIIAVFCSVGGVQSQSETVWRQADRYQVPRMAFINKMDRTGANFFKVYEQIRDRLRANAVPIQIPIGSENEFTGIVDLVAMKALIYNDDQGTDIQETEIPADVEKLAQEYRLKLVESVAETDDALTEKYLEGEELTAEEIRKALRLATISGTVVPILCGSAFKNKGIQLLLNAVVDYLPAPQEVPAIQGTLPNGELDVRPADDEAPLASLAFKIMSDPYGRLTFLRVYSGVLAKGSYILNSTKDKKERISRLIVLKADDRIEVDELRAGDLGAVVGLKDTLTGDTICDKDNPIILESLYVPEPVISVAVEPKTKQDIDKLSQALQALSDEDPTFRVSVDPETNQTVIAGMGELHLEILVDRMLREYKVKANVGKPQVAYRETIRQQIQAEGKFIRQSGGKGQYGHVVIELEPGDPGSGFEFVSKIVGGTVPKEFISPAEQGMKEACEAGVLAGYPLIDVKATLVDGSYHDVDSSEMAFKIAGSMAIKEGVIKASPVLLEPMMKVEVEVPEDFIGNIIGDLNSRRGQIEGQGLETGMAKVMAKVPLAEMFGYATDMRSKTQGRGVFSMEFSNYEEVPHNVAETIISKSRGYV.

In terms of domain architecture, tr-type G spans 8–282 (ERVRNIGIAA…AVVDYLPAPQ (275 aa)). GTP-binding positions include 17-24 (AHIDAGKT), 81-85 (DTPGH), and 135-138 (NKMD).

The protein belongs to the TRAFAC class translation factor GTPase superfamily. Classic translation factor GTPase family. EF-G/EF-2 subfamily.

It localises to the cytoplasm. In terms of biological role, catalyzes the GTP-dependent ribosomal translocation step during translation elongation. During this step, the ribosome changes from the pre-translocational (PRE) to the post-translocational (POST) state as the newly formed A-site-bound peptidyl-tRNA and P-site-bound deacylated tRNA move to the P and E sites, respectively. Catalyzes the coordinated movement of the two tRNA molecules, the mRNA and conformational changes in the ribosome. The chain is Elongation factor G 1 from Trichodesmium erythraeum (strain IMS101).